The primary structure comprises 191 residues: Orotate phosphoribosyltransferase (191 aa).

Glu-114 to Ser-122 lines the 5-phospho-alpha-D-ribose 1-diphosphate pocket. Residues Thr-118 and Arg-146 each coordinate orotate.

The protein belongs to the purine/pyrimidine phosphoribosyltransferase family. PyrE subfamily. Homodimer. Mg(2+) is required as a cofactor.

The catalysed reaction is orotidine 5'-phosphate + diphosphate = orotate + 5-phospho-alpha-D-ribose 1-diphosphate. The protein operates within pyrimidine metabolism; UMP biosynthesis via de novo pathway; UMP from orotate: step 1/2. Functionally, catalyzes the transfer of a ribosyl phosphate group from 5-phosphoribose 1-diphosphate to orotate, leading to the formation of orotidine monophosphate (OMP). The polypeptide is Orotate phosphoribosyltransferase (Clostridium botulinum (strain Langeland / NCTC 10281 / Type F)).